A 147-amino-acid polypeptide reads, in one-letter code: Hemoglobin subunit delta (147 aa).

A Globin domain is found at 3–147; it reads HLTPDEKNAV…VATALAHKYH (145 aa). Phosphoserine is present on S51. Heme b is bound by residues H64 and H93.

It belongs to the globin family. As to quaternary structure, heterotetramer of two delta chains and two alpha chains. Red blood cells.

This is Hemoglobin subunit delta (HBD) from Otolemur crassicaudatus (Brown greater galago).